We begin with the raw amino-acid sequence, 61 residues long: Small ribosomal subunit protein uS14 (61 aa).

Zn(2+) is bound by residues Cys24, Cys27, Cys40, and Cys43.

It belongs to the universal ribosomal protein uS14 family. Zinc-binding uS14 subfamily. Part of the 30S ribosomal subunit. Contacts proteins S3 and S10. The cofactor is Zn(2+).

Its function is as follows. Binds 16S rRNA, required for the assembly of 30S particles and may also be responsible for determining the conformation of the 16S rRNA at the A site. The polypeptide is Small ribosomal subunit protein uS14 (Mycoplasma pneumoniae (strain ATCC 29342 / M129 / Subtype 1) (Mycoplasmoides pneumoniae)).